An 821-amino-acid polypeptide reads, in one-letter code: Probable E3 ubiquitin-protein ligase hulA (821 aa).

The 112-residue stretch at 1–112 (MGSNLPAQPN…QMGGDEMLTR (112 aa)) folds into the C2 domain. 2 disordered regions span residues 140–240 (PNQA…WERR) and 255–359 (RTTT…YFVD). 4 stretches are compositionally biased toward polar residues: residues 151-173 (AQSS…SVSP), 181-201 (AASN…PTST), 217-228 (QGSRTNLSSFED), and 255-272 (RTTT…QTQR). The WW 1 domain maps to 231 to 264 (GRLPAGWERREDNLGRTYYVDHNTRTTTWTRPSS). Residues 281 to 296 (LERRAHQSRMLPEDRT) show a composition bias toward basic and acidic residues. Residues 297 to 306 (GANSPNLQES) show a composition bias toward polar residues. Low complexity predominate over residues 311–339 (PQQAHTPPAGGSASAVSMMATGATTAGTG). 2 consecutive WW domains span residues 339–372 (GELP…DPRR) and 399–432 (GPLP…DPRL). The HECT domain occupies 488 to 821 (SASDLKKRLM…VEETLGFGQE (334 aa)). Cys789 (glycyl thioester intermediate) is an active-site residue.

It belongs to the RSP5/NEDD4 family. As to quaternary structure, interacts with creD.

The protein localises to the cytoplasm. The enzyme catalyses S-ubiquitinyl-[E2 ubiquitin-conjugating enzyme]-L-cysteine + [acceptor protein]-L-lysine = [E2 ubiquitin-conjugating enzyme]-L-cysteine + N(6)-ubiquitinyl-[acceptor protein]-L-lysine.. Its pathway is protein modification; protein ubiquitination. Functionally, E3 ubiquitin-protein ligase which accepts ubiquitin from an E2 ubiquitin-conjugating enzyme in the form of a thioester and then directly transfers the ubiquitin to targeted substrates. Probably involved in the regulatory network controlling carbon source utilization. The chain is Probable E3 ubiquitin-protein ligase hulA (hulA) from Aspergillus niger (strain ATCC MYA-4892 / CBS 513.88 / FGSC A1513).